A 2116-amino-acid chain; its full sequence is Non-structural polyprotein p200 (2116 aa).

The interval 36 to 49 (EVRDVVTAAQKRAI) is required for efficient proteolysis and P150-P90 interaction. The Alphavirus-like MT domain maps to 57–247 (VFTQMQVSDH…TRPCTTRIYQ (191 aa)). Residues 715–805 (GQLALTSPPP…PATPARADPD (91 aa)) form a disordered region. Composition is skewed to pro residues over residues 721–730 (SPPPDNPPPP) and 744–767 (GPPP…PPRA). 3 short sequence motifs (pxxPxR; class II SH3-binding) span residues 727–732 (PPPPRR), 747–752 (PPAPAR), and 761–766 (PPAPPR). One can recognise a Macro domain in the interval 806–985 (SDIVESYARA…LMHASVLVGA (180 aa)). The interval 990 to 1028 (RRVSPPPTEPPASRPADDPGRSAQRTAPPPAAPPGDAAA) is disordered. The segment covering 993 to 1002 (SPPPTEPPAS) has biased composition (pro residues). The region spanning 1000-1301 (PASRPADDPG…WLAVPLSRGG (302 aa)) is the Peptidase C27 domain. Cys1152 serves as the catalytic For cysteine protease activity. Residues 1152–1183 (CWLRAAANVAQAARACGAYTSAGCPKCAYGRA) form an interaction with host CALM1 region. Zn(2+)-binding residues include Cys1175, Cys1178, Cys1227, and His1273. An EF-hand-like region spans residues 1193–1228 (FAALSQRWIASHADASLDGTGDPLDPLMATVGCACS). The active-site For cysteine protease activity is His1273. One can recognise a (+)RNA virus helicase ATP-binding domain in the interval 1320-1468 (EVRRLGDDAM…VPDRWPTERS (149 aa)). An a ribonucleoside 5'-triphosphate-binding site is contributed by 1352–1359 (MAAGAGKT). The region spanning 1469–1609 (RHTWRFPDCW…ELKEVPAGID (141 aa)) is the (+)RNA virus helicase C-terminal domain. The tract at residues 1700-1900 (YRAGEDGSTL…VELEISAALL (201 aa)) is involved in P150-P90 interaction. The 112-residue stretch at 1870–1981 (TNAIEVDFTE…FLPEGARSAA (112 aa)) folds into the RdRp catalytic domain. Positions 1902–1906 (LPCAE) match the Human RB1 binding motif.

As to quaternary structure, interacts with RNA-directed RNA polymerase p90. Interacts with host CALM1; this interaction is necessary for the protease activity and viral infectivity. Interacts with host C1QBP. Interacts with the capsid protein. In terms of assembly, interacts with human RB1/retinoblastoma protein. Interacts with protease/methyltransferase p150. Zn(2+) is required as a cofactor. Post-translationally, specific enzymatic cleavage by its own cysteine protease yield mature proteins p150 and p90.

It localises to the host membrane. The protein resides in the host cytoplasm. Its subcellular location is the host perinuclear region. It carries out the reaction RNA(n) + a ribonucleoside 5'-triphosphate = RNA(n+1) + diphosphate. The enzyme catalyses a ribonucleoside 5'-triphosphate + H2O = a ribonucleoside 5'-diphosphate + phosphate + H(+). It catalyses the reaction ATP + H2O = ADP + phosphate + H(+). Functionally, probable principal replicase for the negative-strand DNA, which replicates the 40S (+) genomic RNA into (-) antigenomic RNA. It cannot replicate the (-) into (+) until cleaved into p150 and p90 mature proteins. Protease that cleaves the precursor polyprotein into two mature products. Together with RNA-directed RNA polymerase p90, replicates the 40S genomic and antigenomic RNA by recognizing replications specific signals. The heterodimer P150/p90 is probably the principal replicase for positive-strand genomic RNA and the 24S subgenomic RNA, which codes for structural proteins. Responsible for the mRNA-capping of the viral mRNAs. This function is necessary since all viral RNAs are synthesized in the cytoplasm, and host capping enzymes are restricted to the nucleus. Forms fibers late in the infection that may be involved in cell-to-cell spread of the virus RNA in the absence of virus particle formation. In terms of biological role, together with protease/methyltransferase p150, replicates the 40S genomic and antigenomic RNA by recognizing replications specific signals. The heterodimer P150/p90 is probably the principal replicase for positive-strand genomic RNA and the 24S subgenomic RNA, which codes for structural proteins. A helicase activity is probably also present. This chain is Non-structural polyprotein p200, found in Rubella virus (strain BRDII) (RUBV).